The chain runs to 431 residues: Glucose-1-phosphate adenylyltransferase (431 aa).

Lys39 contributes to the beta-D-fructose 1,6-bisphosphate binding site. AMP-binding residues include Arg40, His46, and Arg52. Position 114 (Tyr114) interacts with alpha-D-glucose 1-phosphate. Arg130 contributes to the AMP binding site. Alpha-D-glucose 1-phosphate-binding positions include Gly179, 194–195, and Ser212; that span reads EK. 2 residues coordinate AMP: Glu370 and Arg386. Beta-D-fructose 1,6-bisphosphate-binding positions include 419 to 423 and 429 to 431; these read REMLR and QER.

It belongs to the bacterial/plant glucose-1-phosphate adenylyltransferase family. Homotetramer.

It carries out the reaction alpha-D-glucose 1-phosphate + ATP + H(+) = ADP-alpha-D-glucose + diphosphate. It functions in the pathway glycan biosynthesis; glycogen biosynthesis. Allosterically activated by fructose-1,6-bisphosphate (F16BP) and inhibited by AMP. Functionally, involved in the biosynthesis of ADP-glucose, a building block required for the elongation reactions to produce glycogen. Catalyzes the reaction between ATP and alpha-D-glucose 1-phosphate (G1P) to produce pyrophosphate and ADP-Glc. The sequence is that of Glucose-1-phosphate adenylyltransferase from Salmonella paratyphi C (strain RKS4594).